We begin with the raw amino-acid sequence, 862 residues long: Alanine--tRNA ligase (862 aa).

Histidine 552, histidine 556, cysteine 653, and histidine 657 together coordinate Zn(2+).

The protein belongs to the class-II aminoacyl-tRNA synthetase family. Requires Zn(2+) as cofactor.

The protein localises to the cytoplasm. It catalyses the reaction tRNA(Ala) + L-alanine + ATP = L-alanyl-tRNA(Ala) + AMP + diphosphate. Functionally, catalyzes the attachment of alanine to tRNA(Ala) in a two-step reaction: alanine is first activated by ATP to form Ala-AMP and then transferred to the acceptor end of tRNA(Ala). Also edits incorrectly charged Ser-tRNA(Ala) and Gly-tRNA(Ala) via its editing domain. The sequence is that of Alanine--tRNA ligase from Nitrosospira multiformis (strain ATCC 25196 / NCIMB 11849 / C 71).